A 1087-amino-acid chain; its full sequence is Exportin-7 (1087 aa).

Residue alanine 2 is modified to N-acetylalanine. The 67-residue stretch at 30–96 (AEKALVEFTN…RNYVLNYLAT (67 aa)) folds into the Importin N-terminal domain. Serine 570 carries the post-translational modification Phosphoserine.

The protein belongs to the exportin family. As to quaternary structure, binds to nucleoporins. Found in a complex with XPO7, EIF4A1, ARHGAP1, VPS26A, VPS29, VPS35 and SFN. Interacts with ARHGAP1 and SFN. Interacts with Ran and cargo proteins in a GTP-dependent manner.

The protein localises to the cytoplasm. Its subcellular location is the nucleus. It localises to the nuclear pore complex. Mediates the nuclear export of proteins (cargos) with broad substrate specificity. In the nucleus binds cooperatively to its cargo and to the GTPase Ran in its active GTP-bound form. Docking of this trimeric complex to the nuclear pore complex (NPC) is mediated through binding to nucleoporins. Upon transit of a nuclear export complex into the cytoplasm, disassembling of the complex and hydrolysis of Ran-GTP to Ran-GDP (induced by RANBP1 and RANGAP1, respectively) cause release of the cargo from the export receptor. XPO7 then return to the nuclear compartment and mediate another round of transport. The directionality of nuclear export is thought to be conferred by an asymmetric distribution of the GTP- and GDP-bound forms of Ran between the cytoplasm and nucleus. In Pongo abelii (Sumatran orangutan), this protein is Exportin-7 (XPO7).